The following is a 160-amino-acid chain: MTLNFNPLETNLVNLAIVIGVLVWFLRGFLGGILDRRRQAILQELQDAETRLKTATEELSKAQSDLAAAQQKADKIRVDGEARAAAIRSDGEQRTIAAMAAVKQGAAADADAEAARIKDILRREAALAAIDKVLSDLPSRLDDQAQARLIDSTITNLENA.

Residues 13–33 traverse the membrane as a helical segment; it reads VNLAIVIGVLVWFLRGFLGGI.

It belongs to the ATPase B chain family. In terms of assembly, F-type ATPases have 2 components, F(1) - the catalytic core - and F(0) - the membrane proton channel. F(1) has five subunits: alpha(3), beta(3), gamma(1), delta(1), epsilon(1). F(0) has four main subunits: a(1), b(1), b'(1) and c(10-14). The alpha and beta chains form an alternating ring which encloses part of the gamma chain. F(1) is attached to F(0) by a central stalk formed by the gamma and epsilon chains, while a peripheral stalk is formed by the delta, b and b' chains.

The protein resides in the cellular thylakoid membrane. F(1)F(0) ATP synthase produces ATP from ADP in the presence of a proton or sodium gradient. F-type ATPases consist of two structural domains, F(1) containing the extramembraneous catalytic core and F(0) containing the membrane proton channel, linked together by a central stalk and a peripheral stalk. During catalysis, ATP synthesis in the catalytic domain of F(1) is coupled via a rotary mechanism of the central stalk subunits to proton translocation. Its function is as follows. Component of the F(0) channel, it forms part of the peripheral stalk, linking F(1) to F(0). The sequence is that of ATP synthase subunit b from Parasynechococcus marenigrum (strain WH8102).